The sequence spans 153 residues: Protein E6 (153 aa).

2 zinc fingers span residues 33 to 69 (CVYC…CNFC) and 106 to 142 (CYRC…CLQC). Positions 151 to 153 (TAV) match the PDZ-binding domain motif.

It belongs to the papillomaviridae E6 protein family. Forms homodimers. Interacts with ubiquitin-protein ligase UBE3A/E6-AP and thus forms a complex with human TP53. Interacts with human NFX1 and MAGI3. Interacts with human IRF3; this interaction inhibits the establishment of antiviral state. Interacts with human TYK2; this interaction inhibits JAK-STAT activation by interferon alpha. Interacts with host DLG1; this interaction leads to the proteasomal degradation of DLG1.

The protein localises to the host cytoplasm. Its subcellular location is the host nucleus. Functionally, plays a major role in the induction and maintenance of cellular transformation. Acts mainly as an oncoprotein by stimulating the destruction of many host cell key regulatory proteins. E6 associates with host UBE3A/E6-AP ubiquitin-protein ligase, and inactivates tumor suppressors TP53 and TP73 by targeting them to the 26S proteasome for degradation. In turn, DNA damage and chromosomal instabilities increase and lead to cell proliferation and cancer development. The complex E6/E6AP targets several other substrates to degradation via the proteasome including host DLG1 or NFX1, a repressor of human telomerase reverse transcriptase (hTERT). The resulting increased expression of hTERT prevents the shortening of telomere length leading to cell immortalization. Other cellular targets including BAK1, Fas-associated death domain-containing protein (FADD) and procaspase 8, are degraded by E6/E6AP causing inhibition of apoptosis. E6 also inhibits immune response by interacting with host IRF3 and TYK2. These interactions prevent IRF3 transcriptional activities and inhibit TYK2-mediated JAK-STAT activation by interferon alpha resulting in inhibition of the interferon signaling pathway. The protein is Protein E6 of Homo sapiens (Human).